The primary structure comprises 443 residues: Probable nitrate/nitrite antiporter NarK1 (443 aa).

Transmembrane regions (helical) follow at residues 23–43 (TLAFTLMFAAWLMFGVLGVPI), 56–76 (WISALAILNGSLWRLLAGILA), 79–99 (YGGRLVFTLMLFFTAIPAYLV), 108–128 (LLLYAFLVGFAGNSFSVGIAW), 142–164 (LGVFGAGNVGASVTKFIGPALIA), 182–202 (FIPFLYAVLLVLMGFVLWFGT), 230–250 (FSLYYVVVFGAYVALSAWLPK), 255–275 (VFGLPLHEAALLTALFIFPAS), 298–318 (FGIILLASGVLMMPEGHIVLY), 329–349 (FTMGVELFTLLVFLIGVGMGI), 368–388 (AVGGLVGMLGALGGFFLPPLF), and 401–421 (TFFVLFLLAAISFLWMHLTVL).

Belongs to the major facilitator superfamily. Nitrate/nitrite porter (TC 2.A.1.8) family.

It localises to the cell membrane. It catalyses the reaction nitrate(in) + nitrite(out) = nitrate(out) + nitrite(in). Functionally, probable nitrate/nitrite antiporter that may be involved in nitrate import and nitrite export during anaerobic growth. The protein is Probable nitrate/nitrite antiporter NarK1 of Thermus thermophilus.